Here is a 1155-residue protein sequence, read N- to C-terminus: uncharacterized protein (1155 aa).

The N-terminal stretch at 1 to 19 (MKKNIFITSLLILLLLLSS) is a signal peptide. The N-palmitoyl cysteine moiety is linked to residue Cys-20. The S-diacylglycerol cysteine moiety is linked to residue Cys-20. A run of 4 helical transmembrane segments spans residues 289–309 (ISVS…FLIG), 395–415 (LGFI…FLIF), 424–444 (ALIT…FMLF), and 459–479 (ISYA…SMII).

Belongs to the TrbL/VirB6 family.

It is found in the cell membrane. This is an uncharacterized protein from Rickettsia prowazekii (strain Madrid E).